A 787-amino-acid polypeptide reads, in one-letter code: LPS-assembly protein LptD (787 aa).

Residues 1–39 (MPPKTLFPLVPACDAAPRKKRLAVALLAVPGLVPAVSQA) form the signal peptide.

Belongs to the LptD family. As to quaternary structure, component of the lipopolysaccharide transport and assembly complex. Interacts with LptE and LptA.

The protein resides in the cell outer membrane. Its function is as follows. Together with LptE, is involved in the assembly of lipopolysaccharide (LPS) at the surface of the outer membrane. This chain is LPS-assembly protein LptD, found in Burkholderia pseudomallei (strain 1710b).